Consider the following 549-residue polypeptide: Thermosome subunit (549 aa).

The span at 528–538 (EKEKEGEKGGG) shows a compositional bias: basic and acidic residues. The segment at 528–549 (EKEKEGEKGGGSEEFSGSSDLD) is disordered. Over residues 540-549 (EEFSGSSDLD) the composition is skewed to low complexity.

Belongs to the TCP-1 chaperonin family. As to quaternary structure, forms an oligomeric complex of eight-membered rings.

Its function is as follows. Molecular chaperone; binds unfolded polypeptides in vitro, and has a weak ATPase activity. The chain is Thermosome subunit (ths) from Pyrococcus horikoshii (strain ATCC 700860 / DSM 12428 / JCM 9974 / NBRC 100139 / OT-3).